A 292-amino-acid chain; its full sequence is Poly(U)-specific endoribonuclease-A (292 aa).

An EndoU domain is found at 8 to 285 (LNHELSKLFN…IGTAYPVLLS (278 aa)). Catalysis depends on residues His162, His178, and Lys224.

It belongs to the ENDOU family. As to quaternary structure, monomer. The cofactor is Mn(2+).

Its subcellular location is the nucleus. The catalysed reaction is uridylyl-uridylyl-ribonucleotide-RNA = a 3'-end uridylyl-2',3'-cyclophospho-uridine-RNA + a 5'-end dephospho-ribonucleoside-RNA. Poly(U)-specific endoribonuclease involved in the processing of intron-encoded box C/D snoRNAs, such as U16 and U86. Releases products that have 2',3'-cyclic phosphate termini at the 3'-end. This chain is Poly(U)-specific endoribonuclease-A (endou-a), found in Xenopus laevis (African clawed frog).